The primary structure comprises 410 residues: Toluene 1,2-dioxygenase system ferredoxin--NAD(+) reductase component (410 aa).

4-35 (HVAIIGNGVGGFTTAQALRAEGFEGRISLIGD) contacts FAD. Residue 145–173 (RLLIVGGGLIGCEVATTARKLGLSVTILE) participates in NAD(+) binding.

This sequence belongs to the bacterial ring-hydroxylating dioxygenase ferredoxin reductase family. In terms of assembly, this dioxygenase system consists of four proteins: the two subunits of the hydroxylase component (todC1 and todC2), a ferredoxin (TodB) and a ferredoxin reductase (TodA). It depends on FAD as a cofactor.

It carries out the reaction 2 reduced [2Fe-2S]-[ferredoxin] + NAD(+) + H(+) = 2 oxidized [2Fe-2S]-[ferredoxin] + NADH. The protein operates within xenobiotic degradation; toluene degradation. In terms of biological role, part of the electron transfer component of toluene 1,2-dioxygenase, transfers electrons from ferredoxin (TodB) to NADH. The protein is Toluene 1,2-dioxygenase system ferredoxin--NAD(+) reductase component (todA) of Pseudomonas putida (strain ATCC 700007 / DSM 6899 / JCM 31910 / BCRC 17059 / LMG 24140 / F1).